The primary structure comprises 423 residues: WD repeat and SOCS box-containing protein 1 (423 aa).

The segment at 76 to 100 (DRSSGAGPRRLSRQNSEGSLLPGEP) is disordered. WD repeat units lie at residues 125–166 (SRCV…LLLN), 169–209 (DHTD…NMVK), 213–252 (GHQN…LIRK), 255–294 (GHHN…VLLE), and 310–347 (ANDR…KSPQ). The region spanning 373–423 (DGSVHFWASPRSIASLQHLCRMTLRRVMPTQQVYTLPIPFSMQDYLAYKTL) is the SOCS box domain.

In terms of assembly, component of a probable ECS E3 ubiquitin-protein ligase complex that contains the Elongin BC complex.

It participates in protein modification; protein ubiquitination. Functionally, probable substrate-recognition component of a SCF-like ECS (Elongin-Cullin-SOCS-box protein) E3 ubiquitin-protein ligase complex which mediates the ubiquitination and subsequent proteasomal degradation of target proteins. This Danio rerio (Zebrafish) protein is WD repeat and SOCS box-containing protein 1 (wsb1).